A 706-amino-acid chain; its full sequence is Dihydroxyacetone synthase (706 aa).

Residues His76 and Gly126 to Leu128 each bind thiamine diphosphate. Mg(2+)-binding residues include Asp167, Asn197, and Val199. Thiamine diphosphate is bound at residue Asn197. Thiamine diphosphate-binding residues include His273, Glu431, and Phe459. Glu431 (proton donor) is an active-site residue. A Microbody targeting signal motif is present at residues Asn704 to Leu706.

Belongs to the transketolase family. It depends on Mg(2+) as a cofactor. Ca(2+) is required as a cofactor. Mn(2+) serves as cofactor. The cofactor is Co(2+). Requires thiamine diphosphate as cofactor.

The protein resides in the peroxisome. It catalyses the reaction D-xylulose 5-phosphate + formaldehyde = dihydroxyacetone + D-glyceraldehyde 3-phosphate. Its function is as follows. Involved in assimilation of formaldehyde. The protein is Dihydroxyacetone synthase (DAS1) of Candida boidinii (Yeast).